A 507-amino-acid chain; its full sequence is Histidine ammonia-lyase (507 aa).

Positions Ala140 to Gly142 form a cross-link, 5-imidazolinone (Ala-Gly). Position 141 is a 2,3-didehydroalanine (Ser) (Ser141).

The protein belongs to the PAL/histidase family. Contains an active site 4-methylidene-imidazol-5-one (MIO), which is formed autocatalytically by cyclization and dehydration of residues Ala-Ser-Gly.

Its subcellular location is the cytoplasm. The enzyme catalyses L-histidine = trans-urocanate + NH4(+). It participates in amino-acid degradation; L-histidine degradation into L-glutamate; N-formimidoyl-L-glutamate from L-histidine: step 1/3. The sequence is that of Histidine ammonia-lyase from Yersinia enterocolitica serotype O:8 / biotype 1B (strain NCTC 13174 / 8081).